Consider the following 463-residue polypeptide: L-seryl-tRNA(Sec) selenium transferase (463 aa).

N6-(pyridoxal phosphate)lysine is present on K295.

This sequence belongs to the SelA family. As to quaternary structure, homodecamer; pentamer of dimers. Binds only one seryl-tRNA(Sec) per dimer. It depends on pyridoxal 5'-phosphate as a cofactor.

It is found in the cytoplasm. It catalyses the reaction L-seryl-tRNA(Sec) + selenophosphate + H(+) = L-selenocysteinyl-tRNA(Sec) + phosphate. It functions in the pathway aminoacyl-tRNA biosynthesis; selenocysteinyl-tRNA(Sec) biosynthesis; selenocysteinyl-tRNA(Sec) from L-seryl-tRNA(Sec) (bacterial route): step 1/1. Converts seryl-tRNA(Sec) to selenocysteinyl-tRNA(Sec) required for selenoprotein biosynthesis. This Escherichia fergusonii (strain ATCC 35469 / DSM 13698 / CCUG 18766 / IAM 14443 / JCM 21226 / LMG 7866 / NBRC 102419 / NCTC 12128 / CDC 0568-73) protein is L-seryl-tRNA(Sec) selenium transferase.